Here is a 436-residue protein sequence, read N- to C-terminus: Histidinol dehydrogenase (436 aa).

Positions 242, 264, and 267 each coordinate substrate. Residues Q264 and H267 each coordinate Zn(2+). Residues E332 and H333 each act as proton acceptor in the active site. Substrate is bound by residues H333, D366, E420, and H425. Position 366 (D366) interacts with Zn(2+). H425 contributes to the Zn(2+) binding site.

This sequence belongs to the histidinol dehydrogenase family. Zn(2+) is required as a cofactor.

The enzyme catalyses L-histidinol + 2 NAD(+) + H2O = L-histidine + 2 NADH + 3 H(+). The protein operates within amino-acid biosynthesis; L-histidine biosynthesis; L-histidine from 5-phospho-alpha-D-ribose 1-diphosphate: step 9/9. Functionally, catalyzes the sequential NAD-dependent oxidations of L-histidinol to L-histidinaldehyde and then to L-histidine. The sequence is that of Histidinol dehydrogenase from Nitratidesulfovibrio vulgaris (strain ATCC 29579 / DSM 644 / CCUG 34227 / NCIMB 8303 / VKM B-1760 / Hildenborough) (Desulfovibrio vulgaris).